Consider the following 247-residue polypeptide: 4-hydroxy-tetrahydrodipicolinate reductase (247 aa).

NAD(+) contacts are provided by residues glycine 12–methionine 17, glycine 78–threonine 80, and alanine 102–phenylalanine 105. Histidine 136 (proton donor/acceptor) is an active-site residue. Histidine 137 provides a ligand contact to (S)-2,3,4,5-tetrahydrodipicolinate. Catalysis depends on lysine 140, which acts as the Proton donor. Glycine 146 to threonine 147 lines the (S)-2,3,4,5-tetrahydrodipicolinate pocket.

It belongs to the DapB family.

Its subcellular location is the cytoplasm. The enzyme catalyses (S)-2,3,4,5-tetrahydrodipicolinate + NAD(+) + H2O = (2S,4S)-4-hydroxy-2,3,4,5-tetrahydrodipicolinate + NADH + H(+). The catalysed reaction is (S)-2,3,4,5-tetrahydrodipicolinate + NADP(+) + H2O = (2S,4S)-4-hydroxy-2,3,4,5-tetrahydrodipicolinate + NADPH + H(+). Its pathway is amino-acid biosynthesis; L-lysine biosynthesis via DAP pathway; (S)-tetrahydrodipicolinate from L-aspartate: step 4/4. Functionally, catalyzes the conversion of 4-hydroxy-tetrahydrodipicolinate (HTPA) to tetrahydrodipicolinate. The protein is 4-hydroxy-tetrahydrodipicolinate reductase of Acidiphilium cryptum (strain JF-5).